The following is a 153-amino-acid chain: MPTLFLFGASEGGLFDFDATLPLMAVQVVLLTFILNALFFKPVGRVVEEREDYVNTSRAEAKKKIAEVELLETELKDQLKEARLEAQKVILEAEQDSENLYKEALALATSEANASREKARREIDSQRDEALNQLKSEADNLGDLIIERLLAKK.

A helical transmembrane segment spans residues 20 to 40; it reads TLPLMAVQVVLLTFILNALFF.

Belongs to the ATPase B chain family. F-type ATPases have 2 components, F(1) - the catalytic core - and F(0) - the membrane proton channel. F(1) has five subunits: alpha(3), beta(3), gamma(1), delta(1), epsilon(1). F(0) has four main subunits: a(1), b(1), b'(1) and c(10-14). The alpha and beta chains form an alternating ring which encloses part of the gamma chain. F(1) is attached to F(0) by a central stalk formed by the gamma and epsilon chains, while a peripheral stalk is formed by the delta, b and b' chains.

It is found in the cellular thylakoid membrane. Functionally, f(1)F(0) ATP synthase produces ATP from ADP in the presence of a proton or sodium gradient. F-type ATPases consist of two structural domains, F(1) containing the extramembraneous catalytic core and F(0) containing the membrane proton channel, linked together by a central stalk and a peripheral stalk. During catalysis, ATP synthesis in the catalytic domain of F(1) is coupled via a rotary mechanism of the central stalk subunits to proton translocation. Component of the F(0) channel, it forms part of the peripheral stalk, linking F(1) to F(0). The b'-subunit is a diverged and duplicated form of b found in plants and photosynthetic bacteria. The chain is ATP synthase subunit b' from Prochlorococcus marinus (strain NATL1A).